Reading from the N-terminus, the 297-residue chain is Coatomer subunit epsilon-2 (297 aa).

Belongs to the COPE family. In terms of assembly, oligomeric complex that consists of at least the alpha, beta, beta', gamma, delta, epsilon and zeta subunits.

Its subcellular location is the cytoplasm. It localises to the golgi apparatus membrane. The protein localises to the cytoplasmic vesicle. The protein resides in the COPI-coated vesicle membrane. In terms of biological role, the coatomer is a cytosolic protein complex that binds to dilysine motifs and reversibly associates with Golgi non-clathrin-coated vesicles, which further mediate biosynthetic protein transport from the ER, via the Golgi up to the trans Golgi network. The coatomer complex is required for budding from Golgi membranes, and is essential for the retrograde Golgi-to-ER transport of dilysine-tagged proteins. In Oryza sativa subsp. japonica (Rice), this protein is Coatomer subunit epsilon-2.